Here is a 530-residue protein sequence, read N- to C-terminus: MMMASKDATSSVDGASGAGQLVPEVNASDPLAMDPVAGSSTAVATAGQVNPIDPWIINNFVQAPQGEFTISPNNTPGDVLFDLSLGPHLNPFLLHLSQMYNGWVGNMRVRIMLAGNAFTAGKIIVSCIPPGFGSHNLTIAQATLFPHVIADVRTLDPIEVPLEDVRNVLFHNNDRNQQTMRLVCMLYTPLRTGGGTGDSFVVAGRVMTCPSPDFNFLFLVPPTVEQKTRPFTLPNLPLSSLSNSRAPLPISSMGISPDNVQSVQFQNGRCTLDGRLVGTTPVSLSHVAKIRGTSNGTVINLTELDGTPFHPFEGPAPIGFPDLGGCDWHINMTQFGHSSQTQYDVDTTPDTFVPHLGSIQANGIGSGNYVGVLSWISPPSHPSGSQVDLWKIPNYGSSITEATHLAPSVYPPGFGEVLVFFMSKMPGPGAYNLPCLLPQEYISHLASEQAPTVGEAALLHYVDPDTGRNLGEFKAYPDGFLTCVPNGASSGPQQLPINGVFVFVSWVSRFYQLKPVGTASSARGRLGLRR.

Positions 1 to 20 (MMMASKDATSSVDGASGAGQ) are disordered. The interval 1–225 (MMMASKDATS…FLFLVPPTVE (225 aa)) is shell domain. A P1 sub-domain 1 region spans residues 226–278 (QKTRPFTLPNLPLSSLSNSRAPLPISSMGISPDNVQSVQFQNGRCTLDGRLVG). Positions 226 to 530 (QKTRPFTLPN…SARGRLGLRR (305 aa)) are protruding domain. The interval 279–405 (TTPVSLSHVA…GSSITEATHL (127 aa)) is P2 sub-domain. The P1 sub-domain 2 stretch occupies residues 406 to 530 (APSVYPPGFG…SARGRLGLRR (125 aa)). The interval 523 to 530 (RGRLGLRR) is plays a role in binding to host histo-blood group structures antigens and in the formation of P-particles.

It belongs to the caliciviridae capsid protein family. In terms of assembly, homodimer. Homomultimer. Interacts with the minor capsid protein VP2. Interacts (via C-terminus) with host type I histo-blood group structures antigens at the surface of target cells. May be cleaved by host protease to generate soluble capsid protein. Assembled capsid cannot be cleaved.

Its subcellular location is the virion. It is found in the host cytoplasm. Functionally, capsid protein self assembles to form an icosahedral capsid with a T=3 symmetry, about 38 nm in diameter, and consisting of 180 capsid proteins. A smaller form of capsid with a diameter of 23 nm might be capsid proteins assembled as icosahedron with T=1 symmetry. The capsid encapsulates the genomic RNA and is decorated with VP2 proteins. Attaches virion to target cells by binding histo-blood group antigens (HBGAs) present on gastroduodenal epithelial cells. In terms of biological role, the soluble capsid protein may play a role in viral immunoevasion. The chain is Capsid protein VP1 from Norovirus (strain Human/NoV/United States/Norwalk/1968/GI) (Hu/NV/NV/1968/US).